The following is a 654-amino-acid chain: Probable replication restart protein PriA (654 aa).

C367, C370, C376, C379, C395, C398, C407, and C410 together coordinate Zn(2+).

The protein belongs to the helicase family. PriA subfamily. As to quaternary structure, component of the replication restart primosome. The cofactor is Zn(2+).

Functionally, initiates the restart of stalled replication forks, which reloads the replicative helicase on sites other than the origin of replication. Recognizes and binds to abandoned replication forks and remodels them to uncover a helicase loading site. Promotes assembly of the primosome at these replication forks. The polypeptide is Probable replication restart protein PriA (Mycobacterium tuberculosis (strain CDC 1551 / Oshkosh)).